We begin with the raw amino-acid sequence, 84 residues long: Translational regulator CsrA (84 aa).

The protein belongs to the CsrA/RsmA family. In terms of assembly, homodimer; the beta-strands of each monomer intercalate to form a hydrophobic core, while the alpha-helices form wings that extend away from the core.

Its subcellular location is the cytoplasm. In terms of biological role, a translational regulator that binds mRNA to regulate translation initiation and/or mRNA stability. Usually binds in the 5'-UTR at or near the Shine-Dalgarno sequence preventing ribosome-binding, thus repressing translation. Its main target seems to be the major flagellin gene, while its function is anatagonized by FliW. This Leptospira borgpetersenii serovar Hardjo-bovis (strain JB197) protein is Translational regulator CsrA.